Consider the following 226-residue polypeptide: Thiamine-phosphate synthase (226 aa).

Residues 46 to 50 (QFRDK) and D83 contribute to the 4-amino-2-methyl-5-(diphosphooxymethyl)pyrimidine site. Mg(2+)-binding residues include D84 and D103. A 4-amino-2-methyl-5-(diphosphooxymethyl)pyrimidine-binding site is contributed by S122. A 2-[(2R,5Z)-2-carboxy-4-methylthiazol-5(2H)-ylidene]ethyl phosphate-binding site is contributed by 149-151 (TQS). K152 serves as a coordination point for 4-amino-2-methyl-5-(diphosphooxymethyl)pyrimidine. 2-[(2R,5Z)-2-carboxy-4-methylthiazol-5(2H)-ylidene]ethyl phosphate-binding positions include G181 and 201-202 (IT).

It belongs to the thiamine-phosphate synthase family. The cofactor is Mg(2+).

It carries out the reaction 2-[(2R,5Z)-2-carboxy-4-methylthiazol-5(2H)-ylidene]ethyl phosphate + 4-amino-2-methyl-5-(diphosphooxymethyl)pyrimidine + 2 H(+) = thiamine phosphate + CO2 + diphosphate. The enzyme catalyses 2-(2-carboxy-4-methylthiazol-5-yl)ethyl phosphate + 4-amino-2-methyl-5-(diphosphooxymethyl)pyrimidine + 2 H(+) = thiamine phosphate + CO2 + diphosphate. The catalysed reaction is 4-methyl-5-(2-phosphooxyethyl)-thiazole + 4-amino-2-methyl-5-(diphosphooxymethyl)pyrimidine + H(+) = thiamine phosphate + diphosphate. Its pathway is cofactor biosynthesis; thiamine diphosphate biosynthesis; thiamine phosphate from 4-amino-2-methyl-5-diphosphomethylpyrimidine and 4-methyl-5-(2-phosphoethyl)-thiazole: step 1/1. Its function is as follows. Condenses 4-methyl-5-(beta-hydroxyethyl)thiazole monophosphate (THZ-P) and 2-methyl-4-amino-5-hydroxymethyl pyrimidine pyrophosphate (HMP-PP) to form thiamine monophosphate (TMP). The chain is Thiamine-phosphate synthase from Haemophilus influenzae (strain ATCC 51907 / DSM 11121 / KW20 / Rd).